The sequence spans 45 residues: Large ribosomal subunit protein bL34 (45 aa).

The protein belongs to the bacterial ribosomal protein bL34 family.

The sequence is that of Large ribosomal subunit protein bL34 from Beutenbergia cavernae (strain ATCC BAA-8 / DSM 12333 / CCUG 43141 / JCM 11478 / NBRC 16432 / NCIMB 13614 / HKI 0122).